Consider the following 435-residue polypeptide: MMEESGIESTPPATPPPPSTVVASPPPLTSGATRPQTVPSPSGISAFTPGDFSSPVPSVALTSTLPPMQSSVPPLPLSSISSPLGLSGPYGIPSASFASPAAGPPLSTGPPLGPVLSAPPMGPPTTGFSVSGGYDITRGHAGRTPQTPLMPSFSSASPMPGIVTNPMMQQPVSGGLDVSSPITFPEDVEDPRVTPDSNAPGGLWGFIKGVAGNPMVKTVLDKTKHSVESMITTLDPGMAPYIKSGGDVDIVVTSDKEVKVAAVRDAFQEVFGLAMVTGEAGQSNIAPQPVGYAAGVKGAQERIDSLRRAAVIHEKQPVVSVENFIAELFPDKWFDIGCLILDDPGYGIHIETFTQATPVALEHVQQAQSLTPPDYNLRWSGLLVTVGEVLERNVPNVSRTDWHQAFTGMSRRQMIYSAAKALAGMYKLRLPSRTV.

Disordered stretches follow at residues 1–54 (MMEE…DFSS) and 101–165 (AAGP…IVTN). Positions 12–28 (PATPPPPSTVVASPPPL) are enriched in pro residues. Polar residues-rich tracts occupy residues 30–45 (SGAT…SGIS) and 144–157 (TPQT…SSAS). Residues 296-389 (VKGAQERIDS…SGLLVTVGEV (94 aa)) are required for interaction with PRKAR1A.

This sequence belongs to the PRRC1 family. In terms of assembly, interacts with PRKAR1A; resulting in PKA activation. In terms of tissue distribution, expressed in the brain, heart, testis and ovary.

It localises to the golgi apparatus. The protein resides in the cytoplasm. Functionally, acts as a regulator of the protein kinase A (PKA) during embryonic development. The polypeptide is Protein PRRC1 (prrc1) (Danio rerio (Zebrafish)).